The primary structure comprises 460 residues: Protein btn1 (460 aa).

11 helical membrane-spanning segments follow: residues 42–62, 76–96, 105–125, 135–155, 164–184, 195–215, 287–307, 323–343, 356–376, 378–398, and 428–448; these read VCVA…VILS, VVLL…PYFI, IIIF…SPPY, LAGI…FVGL, LAAW…AYAL, ATLL…FMVL, GLFF…YTIN, FAHF…GVFI, LYLP…QAVF, FIPS…LGGL, and AAGI…LCDW.

Belongs to the battenin family.

Its subcellular location is the vacuole membrane. In terms of biological role, involved in vacuolar transport and vacuole pH homeostasis. Also required for cytokinesis. In Aspergillus fumigatus (strain ATCC MYA-4609 / CBS 101355 / FGSC A1100 / Af293) (Neosartorya fumigata), this protein is Protein btn1 (btn1).